A 126-amino-acid polypeptide reads, in one-letter code: Small ribosomal subunit protein uS8 (126 aa).

It belongs to the universal ribosomal protein uS8 family. In terms of assembly, part of the 30S ribosomal subunit. Contacts proteins S5 and S12.

In terms of biological role, one of the primary rRNA binding proteins, it binds directly to 16S rRNA central domain where it helps coordinate assembly of the platform of the 30S subunit. This chain is Small ribosomal subunit protein uS8, found in Lawsonia intracellularis (strain PHE/MN1-00).